Here is a 201-residue protein sequence, read N- to C-terminus: Extracellular superoxide dismutase [Cu-Zn] (201 aa).

Residues 1–42 (MINSFIVIFLSFLIFINYANLVCVEATHVYGRRSHSNGMHGN) form the signal peptide. 3 residues coordinate Cu cation: H89, H91, and H106. C100 and C192 are joined by a disulfide. Zn(2+) contacts are provided by H106, H114, H123, and D126. H163 contacts Cu cation.

It belongs to the Cu-Zn superoxide dismutase family. In terms of assembly, homodimer. Cu cation is required as a cofactor. The cofactor is Zn(2+).

The protein localises to the secreted. Its subcellular location is the extracellular space. It carries out the reaction 2 superoxide + 2 H(+) = H2O2 + O2. Destroys radicals which are normally produced within the cells and which are toxic to biological systems. May act in the parasite defense against phagocyte-generated reactive oxygen species. This Onchocerca volvulus protein is Extracellular superoxide dismutase [Cu-Zn] (sod-4).